We begin with the raw amino-acid sequence, 157 residues long: Oocyte zinc finger protein XlCOF2 (157 aa).

5 consecutive C2H2-type zinc fingers follow at residues 6 to 28, 34 to 56, 79 to 101, 107 to 129, and 135 to 157; these read FTCTECGKNFSFTTSFIRHMRIH, YSCADCGKHFSEKMYLQFHQKNP, FTCTECGKCFSLSSYLHRHQRLH, FSCAECGKAFSGKAQLQDHQNTH, and FTCTECGKCFTRKGSLQMHQKIH.

Belongs to the krueppel C2H2-type zinc-finger protein family.

The protein resides in the nucleus. May be involved in transcriptional regulation. This chain is Oocyte zinc finger protein XlCOF2, found in Xenopus laevis (African clawed frog).